Reading from the N-terminus, the 270-residue chain is Phosphonoacetaldehyde hydrolase (270 aa).

Aspartate 11 acts as the Nucleophile in catalysis. Mg(2+) is bound by residues aspartate 11 and alanine 13. Lysine 53 functions as the Schiff-base intermediate with substrate in the catalytic mechanism. A Mg(2+)-binding site is contributed by aspartate 187.

The protein belongs to the HAD-like hydrolase superfamily. PhnX family. In terms of assembly, homodimer. The cofactor is Mg(2+).

The catalysed reaction is phosphonoacetaldehyde + H2O = acetaldehyde + phosphate + H(+). Involved in phosphonate degradation. In Salmonella enteritidis PT4 (strain P125109), this protein is Phosphonoacetaldehyde hydrolase.